Reading from the N-terminus, the 444-residue chain is Glucoside xylosyltransferase 2 (444 aa).

At 1–4 the chain is on the cytoplasmic side; that stretch reads MKLR. The chain crosses the membrane as a helical; Signal-anchor for type II membrane protein span at residues 5 to 25; sequence SKAAALLLLALAVLLLALLSL. Over 26 to 444 the chain is Lumenal; the sequence is RARRDPEPPG…IIHMGPNPMS (419 aa). The disordered stretch occupies residues 31 to 101; sequence PEPPGFPARP…LARRPGETRS (71 aa). A compositionally biased stretch (basic residues) spans 68–83; that stretch reads RSPRRQPPRLRPRAGR. The span at 87-101 shows a compositional bias: basic and acidic residues; that stretch reads ASREKLARRPGETRS. N-linked (GlcNAc...) asparagine glycosylation is present at Asn275.

It belongs to the glycosyltransferase 8 family.

The protein resides in the membrane. It catalyses the reaction 3-O-(beta-D-glucosyl)-L-seryl-[EGF-like domain protein] + UDP-alpha-D-xylose = 3-O-[alpha-D-xylosyl-(1-&gt;3)-beta-D-glucosyl]-L-seryl-[EGF-like domain protein] + UDP + H(+). Its function is as follows. Glycosyltransferase which elongates the O-linked glucose attached to EGF-like repeats in the extracellular domain of Notch proteins by catalyzing the addition of xylose. The chain is Glucoside xylosyltransferase 2 (Gxylt2) from Mus musculus (Mouse).